The chain runs to 72 residues: Prokaryotic ubiquitin-like protein Pup (72 aa).

Over residues 1–11 (MAQRDTGGGQQ) the composition is skewed to gly residues. The tract at residues 1–41 (MAQRDTGGGQQRTGRRDDETAEAEVEESGASDLKERHEKLS) is disordered. The segment covering 19 to 29 (ETAEAEVEESG) has biased composition (acidic residues). Residues 22–61 (EAEVEESGASDLKERHEKLSEDVDSLLDEIDDVLEENAEE) adopt a coiled-coil conformation. The tract at residues 28 to 66 (SGASDLKERHEKLSEDVDSLLDEIDDVLEENAEEFVKGY) is ARC ATPase binding. Basic and acidic residues predominate over residues 32 to 41 (DLKERHEKLS). Residue glutamine 72 is modified to Deamidated glutamine. Residue glutamine 72 forms an Isoglutamyl lysine isopeptide (Gln-Lys) (interchain with K-? in acceptor proteins) linkage.

Belongs to the prokaryotic ubiquitin-like protein family. In terms of assembly, strongly interacts with the proteasome-associated ATPase ARC through a hydrophobic interface; the interacting region of Pup lies in its C-terminal half. There is one Pup binding site per ARC hexamer ring. Is modified by deamidation of its C-terminal glutamine to glutamate by the deamidase Dop, a prerequisite to the subsequent pupylation process.

It functions in the pathway protein degradation; proteasomal Pup-dependent pathway. Its function is as follows. Protein modifier that is covalently attached to lysine residues of substrate proteins, thereby targeting them for proteasomal degradation. The tagging system is termed pupylation. The protein is Prokaryotic ubiquitin-like protein Pup of Parafrankia sp. (strain EAN1pec).